Reading from the N-terminus, the 1040-residue chain is Multidrug resistance protein MdtB (1040 aa).

12 helical membrane-spanning segments follow: residues 16 to 36 (FILR…AGLV), 342 to 362 (DVQF…YLFL), 373 to 393 (IAVP…GFSV), 396 to 416 (LTLM…IVVI), 440 to 460 (IGFT…PLLF), 472 to 492 (FAVT…TLTP), 537 to 557 (WITL…YIVI), 865 to 885 (STIW…GVLY), 888 to 908 (FIHP…ALLA), 911 to 931 (ISGS…IGIV), 968 to 988 (ILMT…STGV), and 1002 to 1022 (GGLV…YLLF).

This sequence belongs to the resistance-nodulation-cell division (RND) (TC 2.A.6) family. MdtB subfamily. Part of a tripartite efflux system composed of MdtA, MdtB and MdtC. MdtB forms a heteromultimer with MdtC.

The protein localises to the cell inner membrane. The protein is Multidrug resistance protein MdtB of Musicola paradisiaca (strain Ech703) (Dickeya paradisiaca).